A 948-amino-acid polypeptide reads, in one-letter code: Coatomer subunit beta-1 (948 aa).

HEAT repeat units follow at residues 49–87 (ETIP…TDSK), 92–126 (PEMI…MKET), 127–164 (EIVE…LPQG), 274–311 (TAIR…TLHR), 312–349 (DIMV…HHNI), and 391–428 (EVAS…TNPK).

As to quaternary structure, oligomeric complex that consists of at least the alpha, beta, beta', gamma, delta, epsilon and zeta subunits.

It is found in the cytoplasm. The protein resides in the golgi apparatus membrane. It localises to the cytoplasmic vesicle. Its subcellular location is the COPI-coated vesicle membrane. In terms of biological role, the coatomer is a cytosolic protein complex that binds to dilysine motifs and reversibly associates with Golgi non-clathrin-coated vesicles, which further mediate biosynthetic protein transport from the ER, via the Golgi up to the trans Golgi network. Coatomer complex is required for budding from Golgi membranes, and is essential for the retrograde Golgi-to-ER transport of dilysine-tagged proteins. This Arabidopsis thaliana (Mouse-ear cress) protein is Coatomer subunit beta-1.